The primary structure comprises 84 residues: MKVVLLVCLVWMMAMMELVSCECWSQADCSGGHCCAGSSFSKNCRPYGGDGEQCEPRNKYEVYSRGCPCEENLMCSVINRCQSA.

Positions 1-21 (MKVVLLVCLVWMMAMMELVSC) are cleaved as a signal peptide. 5 cysteine pairs are disulfide-bonded: C23-C35, C29-C44, C34-C67, C54-C75, and C69-C81.

It belongs to the AVIT (prokineticin) family. In terms of tissue distribution, expressed by the venom gland.

The protein localises to the secreted. This chain is U8-theraphotoxin-Hhn1e, found in Cyriopagopus hainanus (Chinese bird spider).